Here is an 882-residue protein sequence, read N- to C-terminus: Alanine--tRNA ligase (882 aa).

The Zn(2+) site is built by His570, His574, Cys672, and His676.

It belongs to the class-II aminoacyl-tRNA synthetase family. Requires Zn(2+) as cofactor.

The protein localises to the cytoplasm. It carries out the reaction tRNA(Ala) + L-alanine + ATP = L-alanyl-tRNA(Ala) + AMP + diphosphate. In terms of biological role, catalyzes the attachment of alanine to tRNA(Ala) in a two-step reaction: alanine is first activated by ATP to form Ala-AMP and then transferred to the acceptor end of tRNA(Ala). Also edits incorrectly charged Ser-tRNA(Ala) and Gly-tRNA(Ala) via its editing domain. This chain is Alanine--tRNA ligase, found in Xanthomonas oryzae pv. oryzae (strain MAFF 311018).